The following is a 244-amino-acid chain: Centromere protein H (244 aa).

Met-1 bears the N-acetylmethionine mark. A disordered region spans residues 1-33 (METQSEEQAVTKPADSGGEGGPPQVAGAQAARP). At Ser-16 the chain carries Phosphoserine. Positions 22–31 (PPQVAGAQAA) are enriched in low complexity. Lys-64 participates in a covalent cross-link: Glycyl lysine isopeptide (Lys-Gly) (interchain with G-Cter in SUMO2). A Phosphothreonine modification is found at Thr-65. Coiled-coil stretches lie at residues 66 to 104 (PEQI…DRMQ) and 146 to 189 (DLEE…MENS).

The protein belongs to the CENP-H/MCM16 family. As to quaternary structure, self-associates. Component of the CENPA-NAC complex, at least composed of CENPA, CENPC, CENPH, CENPM, CENPN, CENPT and CENPU. The CENPA-NAC complex interacts with the CENPA-CAD complex, composed of CENPI, CENPK, CENPL, CENPO, CENPP, CENPQ, CENPR and CENPS. Interacts with KIF2C and NDC80.

The protein localises to the nucleus. It localises to the chromosome. The protein resides in the centromere. Its subcellular location is the kinetochore. Its function is as follows. Component of the CENPA-NAC (nucleosome-associated) complex, a complex that plays a central role in assembly of kinetochore proteins, mitotic progression and chromosome segregation. The CENPA-NAC complex recruits the CENPA-CAD (nucleosome distal) complex and may be involved in incorporation of newly synthesized CENPA into centromeres. The polypeptide is Centromere protein H (CENPH) (Bos taurus (Bovine)).